The chain runs to 371 residues: MSVESAENNIRGVPTHGGRYLQYNIYGNLFEVSRKYVPPIRSVGRGAYGIVCAAVNAETREEVAIKKIGNAFDNRIDAKRTLREIKLLRHMDHENVMSIKDIIRPPQKENFNHVYIVSELMDTDLHQIIRSNQPMTDDHCRYFVYQLLRGLKYVHSANVLHRDLKPSNLLLNANCDLKIGDFGLARTTSETDFMTEYVVTRWYRAPELLLNCSDYTAAIDIWSVGCILGEIVTRQPLFPGRDYVHQLRLVTELIGSPDDASLGFLRSENARRYVRQLPQYPKQNFSARFPNMSPGAVDLLEKMLIFDPSKRIKVDEALCHPYMAPLHDINEEPVCARPFSFDFEEPMFTEEDIKELIWKESVRFNPDPPIN.

In terms of domain architecture, Protein kinase spans 37-323 (VPPIRSVGRG…VDEALCHPYM (287 aa)). ATP contacts are provided by residues 43-51 (VGRGAYGIV) and Lys-66. Asp-163 serves as the catalytic Proton acceptor. Thr-195 carries the post-translational modification Phosphothreonine. The TXY motif lies at 195–197 (TEY). Residue Tyr-197 is modified to Phosphotyrosine.

The protein belongs to the protein kinase superfamily. CMGC Ser/Thr protein kinase family. MAP kinase subfamily. Mg(2+) serves as cofactor. In terms of processing, dually phosphorylated on Thr-195 and Tyr-197, which activates the enzyme. Autophosphorylated.

It carries out the reaction L-seryl-[protein] + ATP = O-phospho-L-seryl-[protein] + ADP + H(+). The enzyme catalyses L-threonyl-[protein] + ATP = O-phospho-L-threonyl-[protein] + ADP + H(+). Its activity is regulated as follows. Activated by tyrosine and threonine phosphorylation. This Medicago sativa (Alfalfa) protein is Mitogen-activated protein kinase homolog MMK2 (MMK2).